Reading from the N-terminus, the 755-residue chain is Thermostable beta-glucosidase B (755 aa).

D231 is a catalytic residue.

This sequence belongs to the glycosyl hydrolase 3 family.

The catalysed reaction is Hydrolysis of terminal, non-reducing beta-D-glucosyl residues with release of beta-D-glucose.. Its pathway is glycan metabolism; cellulose degradation. This is Thermostable beta-glucosidase B (bglB) from Acetivibrio thermocellus (strain ATCC 27405 / DSM 1237 / JCM 9322 / NBRC 103400 / NCIMB 10682 / NRRL B-4536 / VPI 7372) (Clostridium thermocellum).